The primary structure comprises 260 residues: Ribonuclease 3 (260 aa).

One can recognise an RNase III domain in the interval 16 to 145; the sequence is VQLLESRLGL…VFGAVFLTSG (130 aa). E58 lines the Mg(2+) pocket. The active site involves D62. D131 and E134 together coordinate Mg(2+). The active site involves E134. Residues 172–241 form the DRBM domain; sequence DYKTLLQEMA…AQATLEKLRE (70 aa). Positions 219 to 260 are disordered; sequence ATGRSKKEAEQSAAQATLEKLREDAACPTSPPPGTPRHDTPA.

Belongs to the ribonuclease III family. In terms of assembly, homodimer. Mg(2+) serves as cofactor.

It localises to the cytoplasm. The enzyme catalyses Endonucleolytic cleavage to 5'-phosphomonoester.. In terms of biological role, digests double-stranded RNA. Involved in the processing of primary rRNA transcript to yield the immediate precursors to the large and small rRNAs (23S and 16S). Processes some mRNAs, and tRNAs when they are encoded in the rRNA operon. Processes pre-crRNA and tracrRNA of type II CRISPR loci if present in the organism. This Myxococcus xanthus (strain DK1622) protein is Ribonuclease 3.